A 579-amino-acid polypeptide reads, in one-letter code: UPF0324 membrane protein DVU_0943 (579 aa).

The next 10 membrane-spanning stretches (helical) occupy residues 26-45, 193-215, 225-243, 250-272, 305-327, 369-391, 430-452, 473-495, 515-533, and 546-568; these read YWAIWLGFVILIAGMWLFLA, AFNISTSLPMLMVVMGLFFAIGM, FLVGFIGVFVVAVIAQMMG, YWGIGTEAWAIIIGMLIANTVGT, IGIPGIFVAWVVTPIVLICTFIF, LTLSIGLSLVFTAIMMIVMPAFI, AATIKMIQNVLIGVVAFGVAVYW, FPKFVLGFLTASIIFSIISGSLG, LRGWFFCLAFTAIGLATNF, and LILYVCGQSFNLVLTLTMAYIMF.

The protein belongs to the UPF0324 family.

The protein localises to the cell membrane. This is UPF0324 membrane protein DVU_0943 from Nitratidesulfovibrio vulgaris (strain ATCC 29579 / DSM 644 / CCUG 34227 / NCIMB 8303 / VKM B-1760 / Hildenborough) (Desulfovibrio vulgaris).